The following is a 522-amino-acid chain: Glycerol kinase (522 aa).

Threonine 15 is a substrate binding site. Arginine 19 provides a ligand contact to ATP. Residues arginine 89–glutamate 90, tyrosine 143, and aspartate 255–glutamine 256 each bind substrate. Residues threonine 276, glycine 321, and glycine 430–asparagine 434 each bind ATP.

It belongs to the FGGY kinase family. In terms of tissue distribution, highly expressed in germinating seeds and senescent leaves, and at lower levels in roots, leaves, flowers and siliques.

It is found in the cytoplasm. The protein resides in the cytosol. It carries out the reaction glycerol + ATP = sn-glycerol 3-phosphate + ADP + H(+). It functions in the pathway polyol metabolism; glycerol degradation via glycerol kinase pathway; sn-glycerol 3-phosphate from glycerol: step 1/1. Key enzyme in the regulation of glycerol uptake and metabolism. Required for resistance to nonhost Pseudomonas bacteria and to the pathogenic fungus B.cinerea. The polypeptide is Glycerol kinase (GLPK) (Arabidopsis thaliana (Mouse-ear cress)).